A 657-amino-acid polypeptide reads, in one-letter code: UvrABC system protein B (657 aa).

The 158-residue stretch at K25–R182 folds into the Helicase ATP-binding domain. G38 to T45 is an ATP binding site. The Beta-hairpin signature appears at Y91–I114. The region spanning Q429–I595 is the Helicase C-terminal domain. The UVR domain occupies K621–K656.

Belongs to the UvrB family. In terms of assembly, forms a heterotetramer with UvrA during the search for lesions. Interacts with UvrC in an incision complex.

It is found in the cytoplasm. Its function is as follows. The UvrABC repair system catalyzes the recognition and processing of DNA lesions. A damage recognition complex composed of 2 UvrA and 2 UvrB subunits scans DNA for abnormalities. Upon binding of the UvrA(2)B(2) complex to a putative damaged site, the DNA wraps around one UvrB monomer. DNA wrap is dependent on ATP binding by UvrB and probably causes local melting of the DNA helix, facilitating insertion of UvrB beta-hairpin between the DNA strands. Then UvrB probes one DNA strand for the presence of a lesion. If a lesion is found the UvrA subunits dissociate and the UvrB-DNA preincision complex is formed. This complex is subsequently bound by UvrC and the second UvrB is released. If no lesion is found, the DNA wraps around the other UvrB subunit that will check the other stand for damage. The sequence is that of UvrABC system protein B from Clostridium botulinum (strain Alaska E43 / Type E3).